The chain runs to 344 residues: Mycothiol acetyltransferase (344 aa).

Residue E36 coordinates 1D-myo-inositol 2-(L-cysteinylamino)-2-deoxy-alpha-D-glucopyranoside. N-acetyltransferase domains follow at residues 40–179 (LALR…TPLP) and 187–344 (VTVR…PSTG). The segment at 61 to 83 (ADTSGPNVPDTPGDQNAADTSTM) is disordered. The segment covering 73-83 (GDQNAADTSTM) has biased composition (polar residues). Acetyl-CoA is bound at residue 109-111 (VVV). Residues E214, K253, and E272 each contribute to the 1D-myo-inositol 2-(L-cysteinylamino)-2-deoxy-alpha-D-glucopyranoside site. Residues 276–278 (VGV) and 283–289 (GGAGLGR) contribute to the acetyl-CoA site. Y310 contributes to the 1D-myo-inositol 2-(L-cysteinylamino)-2-deoxy-alpha-D-glucopyranoside binding site. An acetyl-CoA-binding site is contributed by 315 to 320 (NVRAVR).

This sequence belongs to the acetyltransferase family. MshD subfamily. Monomer.

It catalyses the reaction 1D-myo-inositol 2-(L-cysteinylamino)-2-deoxy-alpha-D-glucopyranoside + acetyl-CoA = mycothiol + CoA + H(+). Its function is as follows. Catalyzes the transfer of acetyl from acetyl-CoA to desacetylmycothiol (Cys-GlcN-Ins) to form mycothiol. This Frankia casuarinae (strain DSM 45818 / CECT 9043 / HFP020203 / CcI3) protein is Mycothiol acetyltransferase.